The chain runs to 65 residues: Protein translocase subunit SecE (65 aa).

A helical membrane pass occupies residues 38–58; the sequence is IVIVTVVFFLIFFYALDLGIG.

This sequence belongs to the SecE/SEC61-gamma family. Component of the Sec protein translocase complex. Heterotrimer consisting of SecY, SecE and SecG subunits. The heterotrimers can form oligomers, although 1 heterotrimer is thought to be able to translocate proteins. Interacts with the ribosome. Interacts with SecDF, and other proteins may be involved. Interacts with SecA.

It localises to the cell membrane. Its function is as follows. Essential subunit of the Sec protein translocation channel SecYEG. Clamps together the 2 halves of SecY. May contact the channel plug during translocation. The polypeptide is Protein translocase subunit SecE (Staphylococcus carnosus (strain TM300)).